The chain runs to 884 residues: Peroxidase-like protein 2 (884 aa).

6 disordered regions span residues 1-53 (TTSC…RTKG), 78-188 (VHSK…SQGA), 204-279 (EKET…DDDD), 653-695 (PEIP…SATQ), 710-744 (DLQPKAQDPTKLPGVPEYLQPKPKSSGLSTQGAVG), and 828-884 (VGGM…SDTK). Positions 17–29 (GTCNNVNKPTVGS) are enriched in polar residues. The span at 32–53 (DKFKRDVKPQYDDKKGDPRTKG) shows a compositional bias: basic and acidic residues. Residues 91–118 (KSSAVSPKMPSMGNLQSLGNLLSLGSVP) show a composition bias toward low complexity. The segment covering 119–129 (VPAPAPAPEPV) has biased composition (pro residues). Basic residues-rich tracts occupy residues 160–172 (PKSKPKPKPKPKP) and 230–245 (RTPKKSPRKKARQSIF). Residues 246-267 (RRRDDRKDDRKGLRGTKGRRDD) show a composition bias toward basic and acidic residues. The segment covering 268 to 279 (SDDNDDSDDDDD) has biased composition (acidic residues). Positions 828 to 856 (VGGMGGSVGVGGSVGSGGSGGSRGAGGSG) are enriched in gly residues. Basic and acidic residues predominate over residues 865–884 (DDSKCSDDEKQKYCKNSDTK).

The protein belongs to the peroxidase family. In terms of tissue distribution, component of the acid-insoluble and acid-soluble organic matrix of calcified layers of the shell (at protein level).

It localises to the secreted. The sequence is that of Peroxidase-like protein 2 from Lottia gigantea (Giant owl limpet).